Consider the following 94-residue polypeptide: Ammonia regulation of amino acid uptake protein (94 aa).

2 consecutive repeats follow at residues 48–57 (HHQIRRRTHQ) and 58–67 (HHQIRRRTHQ).

Involved in ammonia regulation of the GAP1 permease. The protein is Ammonia regulation of amino acid uptake protein (AUA1) of Saccharomyces cerevisiae (strain ATCC 204508 / S288c) (Baker's yeast).